A 112-amino-acid chain; its full sequence is ATP-dependent Clp protease adapter protein ClpS (112 aa).

It belongs to the ClpS family. As to quaternary structure, binds to the N-terminal domain of the chaperone ClpA.

Its function is as follows. Involved in the modulation of the specificity of the ClpAP-mediated ATP-dependent protein degradation. This chain is ATP-dependent Clp protease adapter protein ClpS, found in Rhodococcus jostii (strain RHA1).